The chain runs to 124 residues: Modulator protein MzrA (124 aa).

Topologically, residues 1 to 7 (MINRRMK) are cytoplasmic. The chain crosses the membrane as a helical span at residues 8 to 28 (TGFVFHLLLLLLPLVVLVTSS). Topologically, residues 29 to 124 (RRTADDVTLH…KLSQQPFKLG (96 aa)) are periplasmic.

It belongs to the MzrA family. In terms of assembly, interacts with EnvZ.

The protein localises to the cell inner membrane. Functionally, modulates the activity of the EnvZ/OmpR two-component regulatory system, probably by directly modulating EnvZ enzymatic activity and increasing stability of phosphorylated OmpR. This chain is Modulator protein MzrA, found in Musicola paradisiaca (strain Ech703) (Dickeya paradisiaca).